A 95-amino-acid polypeptide reads, in one-letter code: MAFKPLHDRVLVRRVQSDEKTKGGLIIPDSAKEKPAEGEITSVGEGARKDSGELIAPAVKAGDRVLFGKWSGTEVTVDGEELLIMKESDILGIIA.

Residues 20-45 (KTKGGLIIPDSAKEKPAEGEITSVGE) form a disordered region.

It belongs to the GroES chaperonin family. As to quaternary structure, heptamer of 7 subunits arranged in a ring. Interacts with the chaperonin GroEL.

It is found in the cytoplasm. Together with the chaperonin GroEL, plays an essential role in assisting protein folding. The GroEL-GroES system forms a nano-cage that allows encapsulation of the non-native substrate proteins and provides a physical environment optimized to promote and accelerate protein folding. GroES binds to the apical surface of the GroEL ring, thereby capping the opening of the GroEL channel. The sequence is that of Co-chaperonin GroES from Paracoccus denitrificans.